A 217-amino-acid chain; its full sequence is Carbon disulfide hydrolase (217 aa).

Zn(2+)-binding residues include C39, H98, and C101. The interval 192-217 is disordered; it reads DKEKRARTDCTPTPYGVKGNQPPRWK.

This sequence belongs to the beta-class carbonic anhydrase family. As to quaternary structure, forms only homooctamers in solution. Zn(2+) serves as cofactor.

The catalysed reaction is carbon disulfide + 2 H2O = 2 hydrogen sulfide + CO2 + 2 H(+). It functions in the pathway sulfur metabolism; hydrogen sulfide biosynthesis. In terms of biological role, catalyzes the conversion of carbon disulfide into hydrogen sulfide and carbon dioxide, with carbonyl sulfide as an intermediate. Likely plays a key role in sulfur metabolism that allows A.thiooxidans S1p to grow on carbon disulfide as the main carbon and energy source. Does not show carbonic anhydrase activity (hydration of CO(2) to carbonate). This Acidithiobacillus thiooxidans (Thiobacillus thiooxidans) protein is Carbon disulfide hydrolase.